A 437-amino-acid chain; its full sequence is Rhoptry apical surface protein 2 (437 aa).

One can recognise a C2 domain in the interval 45–179 (GCLGSLFFYL…PRINLSLHKL (135 aa)). The region spanning 230–338 (EGPLERLNAN…FIEKLRAYRE (109 aa)) is the PH domain. Residues 341–437 (STRVPSQKGA…SVVGDEEPQT (97 aa)) form a disordered region. Residues 375-384 (RKSGGKKSRR) show a composition bias toward basic residues.

Interacts with RASP1. Interacts with RASP3.

It localises to the cytoplasmic vesicle. The protein localises to the secretory vesicle. Its subcellular location is the rhoptry membrane. Essential for tachyzoite invasion of host cells by controlling rhoptry secretion. Binds to phosphatidic acid (PA) and phosphatidylinositol 4,5-bisphosphate (PIP2) lipids and thus, likely contributes to the assembly of the machinery that docks or primes the rhoptry to the parasite cell membrane prior to the fusion with the host cell membrane. This chain is Rhoptry apical surface protein 2, found in Toxoplasma gondii (strain ATCC 50853 / GT1).